We begin with the raw amino-acid sequence, 123 residues long: Protein TraJ (123 aa).

Monomer.

It is found in the cytoplasm. In terms of biological role, transfer of plasmid RP4 during bacterial conjugation requires the plasmid-encoded TraJ protein, which binds to a 19-base pair invert sequence repetition within the transfer origin. TraJ protein is bound to only one side of the DNA helix. This nucleoprotein structure is the initial complex in the pathway to assemble a functional relaxosome. This Escherichia coli protein is Protein TraJ (traJ).